Consider the following 509-residue polypeptide: Membrane-bound lytic murein transglycosylase F (509 aa).

The first 40 residues, 1 to 40 (MLASACTHSWRTGRFLNRIIKSSVQTLTAAALIANLSACS), serve as a signal peptide directing secretion. The non-LT domain stretch occupies residues 41 to 280 (RPTTLEKIEQ…YLQERYFGHV (240 aa)). Residues 281–509 (NQLNYVGART…APFRVTPPML (229 aa)) are LT domain. Glutamate 327 is an active-site residue. The tract at residues 474-500 (DGSVAQNEDAPTTGADGTTEETPAIPA) is disordered.

This sequence in the N-terminal section; belongs to the bacterial solute-binding protein 3 family. In the C-terminal section; belongs to the transglycosylase Slt family.

The protein resides in the cell outer membrane. The enzyme catalyses Exolytic cleavage of the (1-&gt;4)-beta-glycosidic linkage between N-acetylmuramic acid (MurNAc) and N-acetylglucosamine (GlcNAc) residues in peptidoglycan, from either the reducing or the non-reducing ends of the peptidoglycan chains, with concomitant formation of a 1,6-anhydrobond in the MurNAc residue.. Its function is as follows. Murein-degrading enzyme that degrades murein glycan strands and insoluble, high-molecular weight murein sacculi, with the concomitant formation of a 1,6-anhydromuramoyl product. Lytic transglycosylases (LTs) play an integral role in the metabolism of the peptidoglycan (PG) sacculus. Their lytic action creates space within the PG sacculus to allow for its expansion as well as for the insertion of various structures such as secretion systems and flagella. The sequence is that of Membrane-bound lytic murein transglycosylase F from Hahella chejuensis (strain KCTC 2396).